We begin with the raw amino-acid sequence, 395 residues long: Elongation factor Tu (395 aa).

The 200-residue stretch at 6 to 205 folds into the tr-type G domain; that stretch reads KPHINVGTIG…NALEKISLPT (200 aa). A G1 region spans residues 15–22; the sequence is GHVDHGKT. 15–22 serves as a coordination point for GTP; it reads GHVDHGKT. Thr-22 contacts Mg(2+). The tract at residues 59 to 63 is G2; the sequence is GITIS. Residues 80–83 are G3; sequence DCPG. Residues 80-84 and 135-138 contribute to the GTP site; these read DCPGH and NKCD. The G4 stretch occupies residues 135–138; it reads NKCD. A G5 region spans residues 173–175; sequence SAV.

This sequence belongs to the TRAFAC class translation factor GTPase superfamily. Classic translation factor GTPase family. EF-Tu/EF-1A subfamily. As to quaternary structure, monomer.

The protein localises to the cytoplasm. The enzyme catalyses GTP + H2O = GDP + phosphate + H(+). Its function is as follows. GTP hydrolase that promotes the GTP-dependent binding of aminoacyl-tRNA to the A-site of ribosomes during protein biosynthesis. This Ehrlichia chaffeensis (strain ATCC CRL-10679 / Arkansas) protein is Elongation factor Tu.